The chain runs to 59 residues: Large ribosomal subunit protein uL30 (59 aa).

The protein belongs to the universal ribosomal protein uL30 family. As to quaternary structure, part of the 50S ribosomal subunit.

The protein is Large ribosomal subunit protein uL30 of Aliivibrio salmonicida (strain LFI1238) (Vibrio salmonicida (strain LFI1238)).